The primary structure comprises 61 residues: MAKKSLKVKQQCHPKFKVRGYTRCGNCGRPHAVLHKFDLCRLCFRNLASKGQIPGVRKASW.

Zn(2+) contacts are provided by C24, C27, C40, and C43.

The protein belongs to the universal ribosomal protein uS14 family. Zinc-binding uS14 subfamily. In terms of assembly, part of the 30S ribosomal subunit. Contacts proteins S3 and S10. It depends on Zn(2+) as a cofactor.

In terms of biological role, binds 16S rRNA, required for the assembly of 30S particles and may also be responsible for determining the conformation of the 16S rRNA at the A site. This is Small ribosomal subunit protein uS14 from Spiroplasma citri.